Here is a 229-residue protein sequence, read N- to C-terminus: Prolactin (229 aa).

Positions Met1–Ser30 are cleaved as a signal peptide. A disulfide bond links Cys34 and Cys41. Ser56 bears the Phosphoserine mark. An N-linked (GlcNAc...) asparagine; partial glycan is attached at Asn61. Ser64 and Ser120 each carry phosphoserine. Intrachain disulfides connect Cys88/Cys204 and Cys221/Cys229.

It belongs to the somatotropin/prolactin family. In terms of assembly, interacts with PRLR.

The protein localises to the secreted. In terms of biological role, prolactin acts primarily on the mammary gland by promoting lactation, mammogenesis, mitogenesis and osmoregulation. This Ovis aries (Sheep) protein is Prolactin (PRL).